Consider the following 325-residue polypeptide: MAHFVQGTSRMIAAESSTEHKECAEPSTRKNLMNSLEQKIRCLEKQRKELLEVNQQWDQQFRSMKELYERKVAELKTKLDAAERFLSTREKDPHQRQRKDDRQREDDRQRDLTRDRLQREEKEKERLNEELHELKEENKLLKGKNTLANKEKEHYECEIKRLNKALQDALNIKCSFSEDCLRKSRVEFCHEEMRTEMEVLKQQVQIYEEDFKKERSDRERLNQEKEELQQINETSQSQLNRLNSQIKACQMEKEKLEKQLKQMYCPPCNCGLVFHLQDPWVPTGPGAVQKQREHPPDYQWYALDQLPPDVQHKANGLSSVKKVHP.

Disordered regions lie at residues 1–30 and 84–129; these read MAHF…STRK and RFLS…RLNE. Positions 17 to 28 are enriched in basic and acidic residues; that stretch reads STEHKECAEPST. A coiled-coil region spans residues 27 to 265; the sequence is STRKNLMNSL…LEKQLKQMYC (239 aa). The interval 190-248 is ubiquitin-binding domain (UBD); it reads HEEMRTEMEVLKQQVQIYEEDFKKERSDRERLNQEKEELQQINETSQSQLNRLNSQIKA.

As to quaternary structure, interacts with TNFAIP3. Interacts with polyubiquitin. Highly expressed in lung, lymph node, thymus and fetal liver. Expressed at lower levels in bone marrow, brain, kidney, spleen, leukocytes and tonsils. Could be detected in heart, salivary gland, adrenal gland, pancreas, ovary and fetal brain. High levels detected in liver, colon, small intestine, muscle, stomach, testis, placenta, thyroid, uterus, prostate, skin and PBL.

Functionally, binds to zinc finger protein TNFAIP3 and inhibits NF-kappa-B activation induced by tumor necrosis factor, Toll-like receptor 4 (TLR4), interleukin-1 and 12-O-tetradecanoylphorbol-13-acetate. Overexpression inhibits NF-kappa-B-dependent gene expression in response to lipopolysaccharide at a level downstream of TRAF6 and upstream of IKBKB. NF-kappa-B inhibition is independent of TNFAIP3 binding. The sequence is that of TNFAIP3-interacting protein 3 from Homo sapiens (Human).